A 250-amino-acid chain; its full sequence is DNA repair protein RecO (250 aa).

Belongs to the RecO family.

Involved in DNA repair and RecF pathway recombination. In Rhodospirillum centenum (strain ATCC 51521 / SW), this protein is DNA repair protein RecO.